Here is a 610-residue protein sequence, read N- to C-terminus: Replication protein E1 (610 aa).

Residues 83–85 carry the Nuclear localization signal motif; that stretch reads KRK. 2 positions are modified to phosphoserine; by host: serine 93 and serine 102. The Nuclear export signal motif lies at 101–110; the sequence is LSPRLEAVTI. The segment at 148–312 is DNA-binding region; it reads ESGTLVVETD…MLDHESAASS (165 aa). The SF3 helicase domain occupies 411 to 561; the sequence is VNFISFLCAL…LPLKENDEVL (151 aa). 437 to 444 is an ATP binding site; the sequence is GPPDTGKS. Lysine 518 participates in a covalent cross-link: Glycyl lysine isopeptide (Lys-Gly) (interchain with G-Cter in SUMO). The tract at residues 591–610 is disordered; that stretch reads ESGRSDRAFRCTAGTNTESI.

This sequence belongs to the papillomaviridae E1 protein family. Can form hexamers. Interacts with E2 protein; this interaction increases E1 DNA binding specificity. Interacts with host DNA polymerase subunit POLA2. Interacts with host single stranded DNA-binding protein RPA1. Interacts with host TOP1; this interaction stimulates the enzymatic activity of TOP1. In terms of processing, phosphorylated. Post-translationally, sumoylated.

The protein resides in the host nucleus. The catalysed reaction is Couples ATP hydrolysis with the unwinding of duplex DNA by translocating in the 3'-5' direction.. It carries out the reaction ATP + H2O = ADP + phosphate + H(+). In terms of biological role, ATP-dependent DNA 3'-5' helicase required for initiation of viral DNA replication. It forms a complex with the viral E2 protein. The E1-E2 complex binds to the replication origin which contains binding sites for both proteins. During the initial step, a dimer of E1 interacts with a dimer of protein E2 leading to a complex that binds the viral origin of replication with high specificity. Then, a second dimer of E1 displaces the E2 dimer in an ATP-dependent manner to form the E1 tetramer. Following this, two E1 monomers are added to each half of the site, which results in the formation of two E1 trimers on the viral ori. Subsequently, two hexamers will be created. The double hexamer acts as a bi-directional helicase machinery and unwinds the viral DNA and then recruits the host DNA polymerase to start replication. In Human papillomavirus type 60, this protein is Replication protein E1.